Consider the following 206-residue polypeptide: Ribosomal RNA large subunit methyltransferase E (206 aa).

S-adenosyl-L-methionine is bound by residues Gly-54, Trp-56, Asp-76, Asp-94, and Asp-118. The active-site Proton acceptor is the Lys-158.

The protein belongs to the class I-like SAM-binding methyltransferase superfamily. RNA methyltransferase RlmE family.

The protein resides in the cytoplasm. It carries out the reaction uridine(2552) in 23S rRNA + S-adenosyl-L-methionine = 2'-O-methyluridine(2552) in 23S rRNA + S-adenosyl-L-homocysteine + H(+). Specifically methylates the uridine in position 2552 of 23S rRNA at the 2'-O position of the ribose in the fully assembled 50S ribosomal subunit. The protein is Ribosomal RNA large subunit methyltransferase E of Methanosphaera stadtmanae (strain ATCC 43021 / DSM 3091 / JCM 11832 / MCB-3).